Reading from the N-terminus, the 178-residue chain is MSEVRLPPLRALDDFVLGSARLAAPDPCDPQRWCHRVINNLLYYQTNYLLCFGIGLALAGYVRPLHTLLSALVVAVALGVLVWAAETRAAVRRCRRSHPAACLAAVLAVGLLVLWVAGGACTFLFSIAGPVLLILVHASLRLRNLKNKIENKIESIGLKRTPMGLLLEALGQEQEAGS.

At 1 to 41 the chain is on the cytoplasmic side; sequence MSEVRLPPLRALDDFVLGSARLAAPDPCDPQRWCHRVINNL. Residues 42–62 form a helical membrane-spanning segment; it reads LYYQTNYLLCFGIGLALAGYV. Over 63 to 64 the chain is Extracellular; the sequence is RP. A helical membrane pass occupies residues 65-85; it reads LHTLLSALVVAVALGVLVWAA. Residues 86-96 are Cytoplasmic-facing; it reads ETRAAVRRCRR. The chain crosses the membrane as a helical span at residues 97–119; the sequence is SHPAACLAAVLAVGLLVLWVAGG. The Extracellular portion of the chain corresponds to 120–122; it reads ACT. A helical membrane pass occupies residues 123–140; sequence FLFSIAGPVLLILVHASL. Topologically, residues 141–178 are cytoplasmic; sequence RLRNLKNKIENKIESIGLKRTPMGLLLEALGQEQEAGS.

This sequence belongs to the PRA1 family. As to quaternary structure, interacts with CCR5 and GDE1. In terms of tissue distribution, strong expression in the brain, small intestine, lung, spleen, and pancreas as well as in tumor tissues of the breast, colon, lung and ovary, with a weaker expression in normal tissues of the same patient. High expression in neuroblastic tumors. Strongly expressed in Purkinje cells and more moderately in cells of the molecular and the granular layers in the cerebellum. Detected in neuronal cells, but not in non-neuronal cells in the cerebral cortex, hippocampus, and lateral ventricles.

The protein localises to the endosome membrane. Functionally, may be involved in ER/Golgi transport and vesicular traffic. Plays a proapoptotic role in cerulenin-induced neuroblastoma apoptosis. The protein is PRA1 family protein 2 (PRAF2) of Homo sapiens (Human).